A 239-amino-acid polypeptide reads, in one-letter code: Putative ABC transporter ATP-binding protein AlbC (239 aa).

Positions 4-238 (LDIHDVSVWY…RREFFEVIGH (235 aa)) constitute an ABC transporter domain. ATP is bound at residue 37–44 (GVNGAGKT).

Belongs to the ABC transporter superfamily.

Functionally, involved in the production of the bacteriocin subtilosin. Required for immunity to subtilosin. The protein is Putative ABC transporter ATP-binding protein AlbC (albC) of Bacillus subtilis (strain 168).